We begin with the raw amino-acid sequence, 797 residues long: MQDGNFLLSALQPEAGVCSLALPSDLQLDRRGAEGPEAERLRAARVQEQVRARLLQLGQQPRHNGAAEPEPEAETARGTSRGQYHTLQAGFSSRSQGLSGDKTSGFRPIAKPAYSPASWSSRSAVDLSCSRRLSSAHNGGSAFGAAGYGGAQPTPPMPTRPVSFHERGGVGSRADYDTLSLRSLRLGPGGLDDRYSLVSEQLEPAATSTYRAFAYERQASSSSSRAGGLDWPEATEVSPSRTIRAPAVRTLQRFQSSHRSRGVGGAVPGAVLEPVARAPSVRSLSLSLADSGHLPDVHGFNSYGSHRTLQRLSSGFDDIDLPSAVKYLMASDPNLQVLGAAYIQHKCYSDAAAKKQARSLQAVPRLVKLFNHANQEVQRHATGAMRNLIYDNADNKLALVEENGIFELLRTLREQDDELRKNVTGILWNLSSSDHLKDRLARDTLEQLTDLVLSPLSGAGGPPLIQQNASEAEIFYNATGFLRNLSSASQATRQKMRECHGLVDALVTSINHALDAGKCEDKSVENAVCVLRNLSYRLYDEMPPSALQRLEGRGRRDLAGAPPGEVVGCFTPQSRRLRELPLAADALTFAEVSKDPKGLEWLWSPQIVGLYNRLLQRCELNRHTTEAAAGALQNITAGDRRWAGVLSRLALEQERILNPLLDRVRTADHHQLRSLTGLIRNLSRNARNKDEMSTKVVSHLIEKLPGSVGEKSPPAEVLVNIIAVLNNLVVASPIAARDLLYFDGLRKLIFIKKKRDSPDSEKSSRAASSLLANLWQYNKLHRDFRAKGYRKEDFLGP.

The disordered stretch occupies residues 56-82; that stretch reads QLGQQPRHNGAAEPEPEAETARGTSRG. R81 is subject to Omega-N-methylarginine. Phosphoserine is present on residues S123, S180, and S183. Y195 is modified (phosphotyrosine; by SRC). Phosphoserine occurs at positions 238 and 240. T250 is subject to Phosphothreonine. Position 261 is an omega-N-methylarginine (R261). Residues 283–288 form a required for interaction with SFN region; sequence SLSLSL. A phosphoserine mark is found at S285, S313, S314, and S331. The required for interaction with GSK3B stretch occupies residues 294-724; sequence LPDVHGFNSY…AEVLVNIIAV (431 aa). ARM repeat units follow at residues 305-348, 351-390, 393-432, 449-487, 491-536, 596-637, 645-684, and 689-730; these read SHRT…HKCY, AAAK…NLIY, ADNK…NLSS, TDLV…NLSS, ATRQ…NLSY, PKGL…NITA, VLSR…NLSR, and KDEM…NLVV. Positions 516–797 are required for binding to PKP2 mRNA; the sequence is AGKCEDKSVE…GYRKEDFLGP (282 aa).

Belongs to the beta-catenin family. Found in a complex composed of CDH1, RAP1A and PKP3; PKP3 acts as a scaffold protein within the complex, the complex is required for CDH1 localization to mature desmosome cell junctions. Interacts with FXR1; the interaction facilitates the binding of PKP3 to PKP2 mRNA. Interacts (via ARM repeats) with GSK3B; the interaction may be involved in PKP3 protein degradation. Interacts with hyperphosphorylated and hypophosphorylated RB1; the interaction inhibits RB1 interaction with and repression of the transcription factor E2F1, potentially via sequestering RB1 to the cytoplasm. Interacts with CDKN1A; the interaction sequesters CDKN1A to the cytoplasm thereby repressing its role as an inhibitor of CDK4- and CDK6-driven RB1 phosphorylation. Interacts (via N-terminus) with SFN; the interaction maintains the cytoplasmic pool of PKP3, facilitates PKP3 exchange at desmosomes and restricts PKP3 localization to existing desmosome cell junctions. Interacts (via N-terminus) with JUP; the interaction is required for PKP3 localization to desmosome cell-cell junctions. In terms of processing, phosphorylated at Ser-285 when localized to the cytoplasm, PKP3 at desmosome cell junctions is not phosphorylated. Phosphorylation at Try-195 by SRC is induced by reactive oxygen species and potentially acts as a release mechanism from desmosome cell-cell junctions. Expressed in the epidermis of the skin, in squamous non-cornifying epithelial cells in the vagina, single layer epithelia of the duodenum and pancreas acini and non-epithelial dendritic reticulum cells of lymph node follicles (at protein level). In terms of tissue distribution, expressed in the oral cavity mucosa, epidermis and small intestine epithelium (at protein level). As to expression, expressed in the oral cavity mucosa and epithelial cells of the crypts and villi in the small intestine (at protein level). Expressed in the epidermis with more abundant expression found in the basal and low spinous cells (at protein level).

It is found in the nucleus. Its subcellular location is the cell junction. It localises to the desmosome. The protein localises to the cytoplasm. The protein resides in the cell membrane. It is found in the adherens junction. In terms of biological role, a component of desmosome cell-cell junctions which are required for positive regulation of cellular adhesion. Required for the localization of DSG2, DSP and PKP2 to mature desmosome junctions. May also play a role in the maintenance of DSG3 protein abundance in keratinocytes. Required for the formation of DSP-containing desmosome precursors in the cytoplasm during desmosome assembly. Also regulates the accumulation of CDH1 to mature desmosome junctions, via cAMP-dependent signaling and its interaction with activated RAP1A. Positively regulates the stabilization of PKP2 mRNA and therefore protein abundance, via its interaction with FXR1, may also regulate the protein abundance of DSP via the same mechanism. May also regulate the protein abundance of the desmosome component PKP1. Required for the organization of desmosome junctions at intercellular borders between basal keratinocytes of the epidermis, as a result plays a role in maintenance of the dermal barrier and regulation of the dermal inflammatory response. Required during epidermal keratinocyte differentiation for cell adherence at tricellular cell-cell contacts, via regulation of the timely formation of adherens junctions and desmosomes in a calcium-dependent manner, and may also play a role in the organization of the intracellular actin fiber belt. Acts as a negative regulator of the inflammatory response in hematopoietic cells of the skin and intestine, via modulation of proinflammatory cytokine production. Important for epithelial barrier maintenance in the intestine to reduce intestinal permeability, thereby plays a role in protection from intestinal-derived endotoxemia. Required for the development of hair follicles, via a role in the regulation of inner root sheaf length, correct alignment and anterior-posterior polarity of hair follicles. Promotes proliferation and cell-cycle G1/S phase transition of keratinocytes. Promotes E2F1-driven transcription of G1/S phase promoting genes by acting to release E2F1 from its inhibitory interaction with RB1, via sequestering RB1 and CDKN1A to the cytoplasm and thereby increasing CDK4- and CDK6-driven phosphorylation of RB1. May act as a scaffold protein to facilitate MAPK phosphorylation of RPS6KA protein family members and subsequently promote downstream EGFR signaling. May play a role in the positive regulation of transcription of Wnt-mediated TCF-responsive target genes. This chain is Plakophilin-3 (PKP3), found in Homo sapiens (Human).